The chain runs to 678 residues: Elongation factor G 2 (678 aa).

Residues 4–278 (QKLRNIGIIA…AVVDYLPSPQ (275 aa)) form the tr-type G domain. Residues 13-20 (AHVDAGKT), 77-81 (DTPGH), and 131-134 (NKMD) contribute to the GTP site.

The protein belongs to the TRAFAC class translation factor GTPase superfamily. Classic translation factor GTPase family. EF-G/EF-2 subfamily.

Its subcellular location is the cytoplasm. Functionally, catalyzes the GTP-dependent ribosomal translocation step during translation elongation. During this step, the ribosome changes from the pre-translocational (PRE) to the post-translocational (POST) state as the newly formed A-site-bound peptidyl-tRNA and P-site-bound deacylated tRNA move to the P and E sites, respectively. Catalyzes the coordinated movement of the two tRNA molecules, the mRNA and conformational changes in the ribosome. In Hahella chejuensis (strain KCTC 2396), this protein is Elongation factor G 2.